Consider the following 141-residue polypeptide: Ribonuclease P protein component (141 aa).

Belongs to the RnpA family. As to quaternary structure, consists of a catalytic RNA component (M1 or rnpB) and a protein subunit.

It carries out the reaction Endonucleolytic cleavage of RNA, removing 5'-extranucleotides from tRNA precursor.. In terms of biological role, RNaseP catalyzes the removal of the 5'-leader sequence from pre-tRNA to produce the mature 5'-terminus. It can also cleave other RNA substrates such as 4.5S RNA. The protein component plays an auxiliary but essential role in vivo by binding to the 5'-leader sequence and broadening the substrate specificity of the ribozyme. The protein is Ribonuclease P protein component of Onion yellows phytoplasma (strain OY-M).